Consider the following 120-residue polypeptide: uncharacterized protein (120 aa).

The chain crosses the membrane as a helical span at residues 40–62 (SFLTDALLNLIYILFFSSSVFNW).

The protein resides in the membrane. This is an uncharacterized protein from Saccharomyces cerevisiae (strain ATCC 204508 / S288c) (Baker's yeast).